Consider the following 1178-residue polypeptide: Dual specificity mitogen-activated protein kinase kinase hemipterous (1178 aa).

2 disordered regions span residues 74–103 (SGSG…SSSS) and 115–148 (ATGT…GGGL). 2 stretches are compositionally biased toward low complexity: residues 91-103 (ATPF…SSSS) and 115-128 (ATGT…PPTT). A Protein kinase domain is found at 197-456 (LKHLGDLGNG…YPELLAQPFI (260 aa)). ATP is bound by residues 203–211 (LGNGTSGNV) and lysine 226. Aspartate 320 functions as the Proton acceptor in the catalytic mechanism. Serine 348 carries the phosphoserine modification. Threonine 352 carries the phosphothreonine modification. The interval 522–648 (TYAGQSPTNP…DESPKKESMF (127 aa)) is disordered. Positions 523–543 (YAGQSPTNPQKTIKPTQIPSY) are enriched in polar residues. Positions 544-570 (QQQQSQFFMQSATQLPQTTTTTPTATT) are enriched in low complexity. Residues 574–593 (GGSGNGNGRGNGSGGSGNGS) are compositionally biased toward gly residues. The span at 594 to 608 (GSSSSASPLSPPSAG) shows a compositional bias: low complexity. Basic and acidic residues predominate over residues 636–646 (KYNDESPKKES). A phosphoserine mark is found at serine 646 and serine 662. Disordered stretches follow at residues 715–783 (TTTP…LQPG), 797–851 (QNQL…STCS), 912–933 (GTSP…GNGN), 999–1026 (TSPV…VVNN), 1042–1108 (SSSS…NRGQ), and 1122–1178 (GQPP…TIDQ). Residues 724 to 734 (TENSQAYDSCD) are compositionally biased toward polar residues. Low complexity-rich tracts occupy residues 735-783 (SSSN…LQPG), 808-817 (RYQQQRQQPP), and 837-851 (THST…STCS). Positions 912 to 928 (GTSPTLQSRSPEQQSDY) are enriched in polar residues. Positions 1042–1055 (SSSSNTSQSTSPTT) are enriched in low complexity. A phosphoserine mark is found at serine 1150 and serine 1154. Residues 1168 to 1178 (PQRRIYRTIDQ) are compositionally biased toward basic and acidic residues.

The protein belongs to the protein kinase superfamily. STE Ser/Thr protein kinase family. MAP kinase kinase subfamily. In terms of processing, MAPKK is itself dependent on Ser/Thr phosphorylation for activity catalyzed by MAP kinase kinase kinases. Post-translationally, weakly autophosphorylated.

It carries out the reaction L-seryl-[protein] + ATP = O-phospho-L-seryl-[protein] + ADP + H(+). The catalysed reaction is L-threonyl-[protein] + ATP = O-phospho-L-threonyl-[protein] + ADP + H(+). The enzyme catalyses L-tyrosyl-[protein] + ATP = O-phospho-L-tyrosyl-[protein] + ADP + H(+). Its function is as follows. Required for the epithelial cell sheet movement called dorsal closure (DC), which allows establishment of the dorsal epidermis. Controls the expression in the dorsal epithelium edges of another dorsal closure gene, puckered (puc). Phosphorylates and activates the MAP kinase bsk; bsk signal transduction pathway mediates an immune response and morphogenesis. The polypeptide is Dual specificity mitogen-activated protein kinase kinase hemipterous (hep) (Drosophila melanogaster (Fruit fly)).